The chain runs to 547 residues: Putative laccase-5 (547 aa).

The N-terminal stretch at Met-1 to Gly-35 is a signal peptide. 2 Plastocyanin-like domains span residues Asn-43–Gly-159 and Glu-170–Thr-323. Asn-48 and Asn-89 each carry an N-linked (GlcNAc...) asparagine glycan. The Cu cation site is built by His-93, His-95, His-138, and His-140. Asn-199, Asn-215, Asn-251, Asn-311, Asn-342, Asn-349, Asn-388, Asn-395, Asn-405, and Asn-430 each carry an N-linked (GlcNAc...) asparagine glycan. Positions Phe-408–Pro-531 constitute a Plastocyanin-like 3 domain. Residues His-448, His-451, His-453, His-510, Cys-511, His-512, and His-516 each contribute to the Cu cation site.

It belongs to the multicopper oxidase family. Cu cation is required as a cofactor.

The protein resides in the secreted. It is found in the extracellular space. It localises to the apoplast. The enzyme catalyses 4 hydroquinone + O2 = 4 benzosemiquinone + 2 H2O. Its function is as follows. Lignin degradation and detoxification of lignin-derived products. This chain is Putative laccase-5 (LAC5), found in Oryza sativa subsp. japonica (Rice).